The sequence spans 423 residues: MDIDQYMTDLGRRARHASRAMARASTAAKNAALDAVARAIERDAQVLKDANARDVARAREKGLDAAFVDRLTLSDKALNTMVEGLRQVASLADPIGEISNLKYRPSGIQVGQMRVPLGVIGIIYESRPNVTIDAAALCLKSGNATILRGGSEALESNTALAKLIGEGLEAAGLPQDAVQVVATADRAAVGKLITMTEYVDVIVPRGGKSLIERLINEARVPMIKHLDGICHVYVDDRADLAKALTVCDNAKTHRYGTCNTMETLLVSSGVAAKLLPPLGKLYRDKQVELRVDAAARTVLADAGVGPLVDATEEDWHTEYLAPVLAIKVVDGLDAAIEHINHYGSHHTDAIVTEDHDRAMRFLREVDSASVMVNASTRFADGFEFGLGAEIGISNDKLHARGPVGLEGLTSLKYVVLGHGEGRQ.

This sequence belongs to the gamma-glutamyl phosphate reductase family.

It localises to the cytoplasm. It catalyses the reaction L-glutamate 5-semialdehyde + phosphate + NADP(+) = L-glutamyl 5-phosphate + NADPH + H(+). It functions in the pathway amino-acid biosynthesis; L-proline biosynthesis; L-glutamate 5-semialdehyde from L-glutamate: step 2/2. In terms of biological role, catalyzes the NADPH-dependent reduction of L-glutamate 5-phosphate into L-glutamate 5-semialdehyde and phosphate. The product spontaneously undergoes cyclization to form 1-pyrroline-5-carboxylate. The sequence is that of Gamma-glutamyl phosphate reductase from Burkholderia lata (strain ATCC 17760 / DSM 23089 / LMG 22485 / NCIMB 9086 / R18194 / 383).